The sequence spans 477 residues: V-type proton ATPase subunit B (477 aa).

R365 is a binding site for ATP.

It belongs to the ATPase alpha/beta chains family. In terms of assembly, V-ATPase is a heteromultimeric enzyme composed of a peripheral catalytic V1 complex (components A to H) attached to an integral membrane V0 proton pore complex (components: a, c, c', c'', d, e, f and VOA1).

The protein resides in the vacuole membrane. Non-catalytic subunit of the V1 complex of vacuolar(H+)-ATPase (V-ATPase), a multisubunit enzyme composed of a peripheral complex (V1) that hydrolyzes ATP and a membrane integral complex (V0) that translocates protons. V-ATPase is responsible for acidifying and maintaining the pH of intracellular compartments. This Encephalitozoon cuniculi (strain GB-M1) (Microsporidian parasite) protein is V-type proton ATPase subunit B.